The sequence spans 545 residues: MVSLLRCQSFKPSSSLICSLALSAAFALSSSAFAEETKPAENKPATPVVSPPKATAQPANKNQVRFTKTGTFDGDSVVKLARKLASKPYVVLKDPLPAGLAKLSYDEYRDIRFNPVSSIWRDQGLPFQMQMFHRGFYFQDLIEIAIVEANQATHLAYEPKYFTAGEVITQALPNDDIGYSGFRIHNQLNTNGVYDELMVFQGASYFRALGKGNSYGLSARGLALKTADPEGEEFPIFRAFWVERPSYDSNLIVVHALLDSPSVAGAYRFSVRPGDNTQIDVEATLFPRVELSKVGLAPSTSMFLHSLNGRHDTDDFRPEVHDSDGLLMFNGRGEHLWRPLANPRQLQVSAFSDNSPQGFGLIQRERNYASYQDLEAHYERRPSLWIEPVGNWGQGAVVLTEIPTESEIHDNIVSFWKPRQPIPAGSEYHFAYRMNWGDEPVAKTNSVVVSRTASGRADIAKATPRRLFVVDYHLNGAMPDELPLAKVESSGGVIANVVIARNAANNGYRLAFELEPEDKDLIELRAELKFSTPRQVETWLYRWTL.

Residues 1–34 form the signal peptide; that stretch reads MVSLLRCQSFKPSSSLICSLALSAAFALSSSAFA. A disordered region spans residues 38 to 60; the sequence is KPAENKPATPVVSPPKATAQPAN.

It belongs to the OpgD/OpgG family.

It is found in the periplasm. It functions in the pathway glycan metabolism; osmoregulated periplasmic glucan (OPG) biosynthesis. Functionally, involved in the biosynthesis of osmoregulated periplasmic glucans (OPGs). The polypeptide is Glucans biosynthesis protein G (Shewanella sp. (strain MR-7)).